Reading from the N-terminus, the 98-residue chain is Co-chaperonin GroES (98 aa).

The protein belongs to the GroES chaperonin family. As to quaternary structure, heptamer of 7 subunits arranged in a ring. Interacts with the chaperonin GroEL.

The protein localises to the cytoplasm. In terms of biological role, together with the chaperonin GroEL, plays an essential role in assisting protein folding. The GroEL-GroES system forms a nano-cage that allows encapsulation of the non-native substrate proteins and provides a physical environment optimized to promote and accelerate protein folding. GroES binds to the apical surface of the GroEL ring, thereby capping the opening of the GroEL channel. In Leifsonia xyli subsp. xyli (strain CTCB07), this protein is Co-chaperonin GroES.